The chain runs to 341 residues: S-adenosylmethionine:tRNA ribosyltransferase-isomerase (341 aa).

Belongs to the QueA family. In terms of assembly, monomer.

The protein localises to the cytoplasm. It carries out the reaction 7-aminomethyl-7-carbaguanosine(34) in tRNA + S-adenosyl-L-methionine = epoxyqueuosine(34) in tRNA + adenine + L-methionine + 2 H(+). It functions in the pathway tRNA modification; tRNA-queuosine biosynthesis. Its function is as follows. Transfers and isomerizes the ribose moiety from AdoMet to the 7-aminomethyl group of 7-deazaguanine (preQ1-tRNA) to give epoxyqueuosine (oQ-tRNA). The chain is S-adenosylmethionine:tRNA ribosyltransferase-isomerase from Halothermothrix orenii (strain H 168 / OCM 544 / DSM 9562).